A 33-amino-acid polypeptide reads, in one-letter code: Cytochrome b6-f complex subunit 5 (33 aa).

The chain crosses the membrane as a helical span at residues leucine 5–alanine 25.

This sequence belongs to the PetG family. In terms of assembly, the 4 large subunits of the cytochrome b6-f complex are cytochrome b6, subunit IV (17 kDa polypeptide, PetD), cytochrome f and the Rieske protein, while the 4 small subunits are PetG, PetL, PetM and PetN. The complex functions as a dimer.

The protein localises to the plastid. It is found in the chloroplast thylakoid membrane. Functionally, component of the cytochrome b6-f complex, which mediates electron transfer between photosystem II (PSII) and photosystem I (PSI), cyclic electron flow around PSI, and state transitions. PetG is required for either the stability or assembly of the cytochrome b6-f complex. This is Cytochrome b6-f complex subunit 5 from Bigelowiella natans (Pedinomonas minutissima).